Consider the following 238-residue polypeptide: Serine protease SplE (238 aa).

The N-terminal stretch at 1 to 36 (MNKNIIIKSIAALTILTSVTGVGTTMVEGIQQTAKA) is a signal peptide. Active-site charge relay system residues include H75, D113, and S191.

Belongs to the peptidase S1B family.

The protein resides in the secreted. The polypeptide is Serine protease SplE (splE) (Staphylococcus aureus).